The sequence spans 1063 residues: Exportin-1 (1063 aa).

The region spanning 43 to 109 (AQSILTTLKE…KKYVVSLIIK (67 aa)) is the Importin N-terminal domain. Residues 1034–1063 (AEEQSNKHQMQRNIPGMLNPHELPEDMQDE) form a disordered region.

Belongs to the exportin family. In terms of assembly, interacts with Clbn (via its N-terminus). Associates with the nuclear pore complex via interaction with mbo and Nup214. Interacts with target proteins containing NES sequences such as actin and dl. In terms of tissue distribution, high expression observed in the developing embryonic brain, hind gut and posterior spiracles shortly before dorsal closure; and in the ventral nerve cord, midgut and somatic musculature shortly after dorsal closure. Expression increases when the tissue is well developed.

The protein resides in the nucleus. The protein localises to the nucleus membrane. Receptor for the leucine-rich nuclear export signal (NES). Binds cooperatively to the NES on its target protein and to the small GTPase Ran in its active GTP-bound form. Involved in the export of dl, RpS2 and the pre-40S ribosome from the nucleus to the cytoplasm. Plays an important role in nuclear pore assembly by mediating nucleoporin condensation and biogenesis of annulate lamellae. Required for the function or maintenance of certain tissues such as brain and gut. The sequence is that of Exportin-1 from Drosophila melanogaster (Fruit fly).